A 90-amino-acid chain; its full sequence is Putative septation protein SpoVG (90 aa).

Belongs to the SpoVG family.

Its function is as follows. Could be involved in septation. The protein is Putative septation protein SpoVG of Clostridium perfringens (strain ATCC 13124 / DSM 756 / JCM 1290 / NCIMB 6125 / NCTC 8237 / Type A).